We begin with the raw amino-acid sequence, 257 residues long: Snake venom serine proteinase 11 (257 aa).

The signal sequence occupies residues 1-18 (MVLIRVLANLLILQLSYA). Positions 19 to 24 (QKSSEL) are excised as a propeptide. The region spanning 25–248 (VVGGDECNIN…YTEWIQSIIT (224 aa)) is the Peptidase S1 domain. 6 disulfide bridges follow: C31–C162, C49–C65, C97–C255, C141–C209, C173–C188, and C199–C224. Residues H64 and D109 each act as charge relay system in the active site. N120 carries N-linked (GlcNAc...) asparagine glycosylation. Catalysis depends on S203, which acts as the Charge relay system.

It belongs to the peptidase S1 family. Snake venom subfamily. Monomer. As to expression, expressed by the venom gland.

It is found in the secreted. Functionally, snake venom serine protease that may act in the hemostasis system of the prey. This Crotalus adamanteus (Eastern diamondback rattlesnake) protein is Snake venom serine proteinase 11.